We begin with the raw amino-acid sequence, 216 residues long: Pentapeptide repeat protein VPA0095 (216 aa).

This sequence belongs to the pentapeptide repeat protein family.

Functionally, has no effect when overexpressed in E.coli. When Cys-115 is mutated to Tyr and overexpressed it increases (fluoro)quinolone resistance in E.coli up to 16-fold for ciprofloxacin, levofloxacin and nalidixic acid. The polypeptide is Pentapeptide repeat protein VPA0095 (Vibrio parahaemolyticus serotype O3:K6 (strain RIMD 2210633)).